The sequence spans 407 residues: NADH dehydrogenase [ubiquinone] 1 alpha subcomplex subunit 10, mitochondrial (407 aa).

A mitochondrion-targeting transit peptide spans 1–60 (MTAVFRVGLVRLVSRATQSPNLLQAQTNALPAAFQQRCSISGKTMRGGPRVPKAAPYPYK).

This sequence belongs to the complex I NDUFA10 subunit family. In terms of assembly, complex I is composed of 45 different subunits. This a component of the hydrophobic protein fraction. Forms a complex including sicily, ND-42 and Hsp83; the complex is necessary to chaperone ND-42 in the cytoplasm before mitochondrial import; the interaction between sicily and ND-42 is direct and occurs preferably between the unprocessed forms in the cytoplasm. The cofactor is FAD. As to expression, expressed in muscles (at protein level).

The protein localises to the mitochondrion matrix. Its subcellular location is the cytoplasm. In terms of biological role, accessory subunit of the mitochondrial membrane respiratory chain NADH dehydrogenase (Complex I), that is believed not to be involved in catalysis. Complex I functions in the transfer of electrons from NADH to the respiratory chain. The immediate electron acceptor for the enzyme is believed to be ubiquinone. This is NADH dehydrogenase [ubiquinone] 1 alpha subcomplex subunit 10, mitochondrial from Drosophila melanogaster (Fruit fly).